The following is a 1397-amino-acid chain: DNA-directed RNA polymerase subunit beta' (1397 aa).

Residues Cys75, Cys77, Cys90, and Cys93 each contribute to the Zn(2+) site. Residues Asp465, Asp467, and Asp469 each contribute to the Mg(2+) site. Cys819, Cys893, Cys900, and Cys903 together coordinate Zn(2+).

Belongs to the RNA polymerase beta' chain family. In terms of assembly, the RNAP catalytic core consists of 2 alpha, 1 beta, 1 beta' and 1 omega subunit. When a sigma factor is associated with the core the holoenzyme is formed, which can initiate transcription. It depends on Mg(2+) as a cofactor. The cofactor is Zn(2+).

The enzyme catalyses RNA(n) + a ribonucleoside 5'-triphosphate = RNA(n+1) + diphosphate. In terms of biological role, DNA-dependent RNA polymerase catalyzes the transcription of DNA into RNA using the four ribonucleoside triphosphates as substrates. This chain is DNA-directed RNA polymerase subunit beta', found in Acinetobacter baumannii (strain ACICU).